Consider the following 373-residue polypeptide: ORC1-type DNA replication protein 2 (373 aa).

Residues Thr-63–Ser-67, Tyr-205, and Arg-217 each bind ATP.

It belongs to the CDC6/cdc18 family.

Its function is as follows. Involved in regulation of DNA replication. This chain is ORC1-type DNA replication protein 2 (cdc6-2), found in Methanosarcina acetivorans (strain ATCC 35395 / DSM 2834 / JCM 12185 / C2A).